The sequence spans 302 residues: (2S)-3-sulfopropanediol sulfolyase activating enzyme (302 aa).

Residues 19–301 (HDGEGIRTLV…RLNIMLKSYE (283 aa)) form the Radical SAM core domain. Residues cysteine 33, cysteine 37, cysteine 40, cysteine 59, cysteine 65, cysteine 68, cysteine 72, cysteine 91, cysteine 94, cysteine 97, and cysteine 101 each coordinate [4Fe-4S] cluster. 39 to 41 (WCS) serves as a coordination point for S-adenosyl-L-methionine. 2 consecutive 4Fe-4S ferredoxin-type domains span residues 50-81 (PERA…SIVG) and 82-111 (GLVC…VYGE). S-adenosyl-L-methionine-binding positions include glycine 141 and 190 to 192 (DIK).

The protein belongs to the organic radical-activating enzymes family. [4Fe-4S] cluster serves as cofactor.

The catalysed reaction is glycyl-[protein] + reduced [flavodoxin] + S-adenosyl-L-methionine = glycin-2-yl radical-[protein] + semiquinone [flavodoxin] + 5'-deoxyadenosine + L-methionine + H(+). The protein operates within organosulfur degradation; alkanesulfonate degradation. In terms of biological role, involved in the degradation of the organosulfur compound 2(S)-dihydroxypropanesulfonate (DHPS). Catalyzes activation of the (2S)-3-sulfopropanediol sulfolyase HpsG under anaerobic conditions by generation of an organic free radical on a glycine residue. The sequence is that of (2S)-3-sulfopropanediol sulfolyase activating enzyme from Bilophila wadsworthia (strain 3_1_6).